The primary structure comprises 1429 residues: Nitric oxide synthase 1 (1429 aa).

An interaction with NOSIP region spans residues 1 to 200 (MEEHTFGVQQ…LQDSGEQDEL (200 aa)). Positions 17-99 (SVRLFKRKVG…ETHVVLILRG (83 aa)) constitute a PDZ domain. Disordered regions lie at residues 114-174 (DGTP…SVSQ) and 271-298 (NNPYSENEQSPASGKQSPTKNGSPSRCP). Residues 163 to 240 (QGRGQGAGSV…TGIQVDRDLD (78 aa)) are interaction with DYNLL1/PIN. Positions 272-294 (NPYSENEQSPASGKQSPTKNGSP) are enriched in polar residues. Serine 280 carries the phosphoserine modification. Serine 334 is a binding site for (6R)-L-erythro-5,6,7,8-tetrahydrobiopterin. Cysteine 415 contributes to the heme b binding site. Positions 478, 587, 588, and 592 each coordinate L-arginine. (6R)-L-erythro-5,6,7,8-tetrahydrobiopterin-binding residues include valine 677, tryptophan 678, and phenylalanine 691. Tyrosine 706 is a binding site for heme b. The interval 725-745 (KRRAIGFKKLAEAVKFSAKLM) is calmodulin-binding. The Flavodoxin-like domain occupies 755–935 (ATILYATETG…AFRTWAKKVF (181 aa)). FMN is bound by residues threonine 761, glutamate 762, threonine 763, lysine 765, serine 766, serine 807, threonine 808, and glycine 812. A phosphoserine mark is found at serine 847, serine 857, and serine 858. FMN-binding residues include serine 886, histidine 891, cysteine 893, glutamate 919, and glutamine 923. In terms of domain architecture, FAD-binding FR-type spans 990–1237 (KRVSAARLLS…VRGAPSFHLP (248 aa)). Arginine 1010 contacts NADP(+). Positions 1032, 1173, 1174, 1175, 1176, 1191, and 1193 each coordinate FAD. Serine 1196 serves as a coordination point for NADP(+). Residues tyrosine 1197, valine 1210, cysteine 1211, and serine 1212 each contribute to the FAD site. Residues threonine 1251, arginine 1284, serine 1313, arginine 1314, lysine 1320, tyrosine 1322, glutamine 1324, aspartate 1357, threonine 1398, and arginine 1400 each coordinate NADP(+).

The protein belongs to the NOS family. In terms of assembly, homodimer. Interacts with DLG4; the interaction possibly being prevented by the association between NOS1 and CAPON. Forms a ternary complex with CAPON and RASD1. Forms a ternary complex with CAPON and SYN1. Interacts with ZDHHC23. Interacts with NOSIP; which may impair its synaptic location. Interacts with HTR4. Interacts with VAC14. Interacts (via N-terminal domain) with DLG4 (via N-terminal tandem pair of PDZ domains). Interacts with SLC6A4. Forms a complex with ASL, ASS1 and SLC7A1; the complex regulates cell-autonomous L-arginine synthesis and citrulline recycling while channeling extracellular L-arginine to nitric oxide synthesis pathway. Interacts with DMD; localizes NOS1 to sarcolemma in muscle cells. Interacts with DYNLL1; inhibits the nitric oxide synthase activity. It depends on heme b as a cofactor. Requires FAD as cofactor. FMN is required as a cofactor. The cofactor is (6R)-L-erythro-5,6,7,8-tetrahydrobiopterin. In terms of processing, ubiquitinated; mediated by STUB1/CHIP in the presence of Hsp70 and Hsp40 (in vitro). Widely expressed in the nervous system: expressed in cerebrum, olfactory bulb, hippocampus, midbrain, cerebellum, pons, medulla oblongata, and spinal cord. Also found in skeletal muscle, where it is localized beneath the sarcolemma of fast twitch muscle fibers, and in spleen, heart, kidney, and liver. N-NOS-1 and N-NOS-2 are found in all parts of the nervous system. NNOS beta and gamma occur in a region-specific manner in the brain and NNOS beta expression is developmentally regulated. NNOS Mu is only found in mature skeletal and cardiac muscles.

The protein resides in the cell membrane. It localises to the sarcolemma. Its subcellular location is the cell projection. It is found in the dendritic spine. It carries out the reaction 2 L-arginine + 3 NADPH + 4 O2 + H(+) = 2 L-citrulline + 2 nitric oxide + 3 NADP(+) + 4 H2O. Stimulated by calcium/calmodulin. Inhibited by DYNLL1 that prevents the dimerization of the protein. Inhibited by NOSIP. Its function is as follows. Produces nitric oxide (NO) which is a messenger molecule with diverse functions throughout the body. In the brain and peripheral nervous system, NO displays many properties of a neurotransmitter. Probably has nitrosylase activity and mediates cysteine S-nitrosylation of cytoplasmic target proteins such SRR. Isoform NNOS Mu may be an effector enzyme for the dystrophin complex. The polypeptide is Nitric oxide synthase 1 (Mus musculus (Mouse)).